Consider the following 311-residue polypeptide: T-cell immunomodulatory protein (311 aa).

N-linked (GlcNAc...) asparagine glycosylation is found at Asn52, Asn70, and Asn181. A helical transmembrane segment spans residues 266-286 (VLLTAIALIGVCVFILAIIGI).

The protein belongs to the TIP family. Interacts with RUVBL1, RUVBL2 and alpha-tubulin.

It localises to the secreted. Its subcellular location is the cell membrane. Modulator of T-cell function. Has a protective effect in graft versus host disease model. This chain is T-cell immunomodulatory protein, found in Macaca fascicularis (Crab-eating macaque).